Here is a 421-residue protein sequence, read N- to C-terminus: uncharacterized protein (421 aa).

Belongs to the glycosyltransferase 28 family.

This is an uncharacterized protein from Mycobacterium leprae (strain TN).